The sequence spans 304 residues: Recombination-associated protein RdgC (304 aa).

This sequence belongs to the RdgC family.

Its subcellular location is the cytoplasm. It localises to the nucleoid. Its function is as follows. May be involved in recombination. The polypeptide is Recombination-associated protein RdgC (Shewanella baltica (strain OS195)).